Consider the following 82-residue polypeptide: Acyl carrier protein (82 aa).

Residues 4-79 (PEMEERLRKI…DALNYLETHQ (76 aa)) enclose the Carrier domain. The residue at position 39 (serine 39) is an O-(pantetheine 4'-phosphoryl)serine.

It belongs to the acyl carrier protein (ACP) family. In terms of processing, 4'-phosphopantetheine is transferred from CoA to a specific serine of apo-ACP by AcpS. This modification is essential for activity because fatty acids are bound in thioester linkage to the sulfhydryl of the prosthetic group.

It localises to the cytoplasm. Its pathway is lipid metabolism; fatty acid biosynthesis. Functionally, carrier of the growing fatty acid chain in fatty acid biosynthesis. This is Acyl carrier protein from Chloroflexus aurantiacus (strain ATCC 29366 / DSM 635 / J-10-fl).